The sequence spans 291 residues: Probable cell wall amidase LytH (291 aa).

A signal peptide spans 1–40 (MKKIEAWLSKKGLKNKRTLIVVIAFVLFIIFLFLLLNSNS). Residues 41-105 (EDSGNITITE…WIAGWHTNLD (65 aa)) enclose the SH3b domain. Residues 118–140 (QGKTIVLDPGHGGSDQGASSNTK) are disordered. Residues 122–286 (IVLDPGHGGS…LEQAIVDGLK (165 aa)) form the MurNAc-LAA domain.

It belongs to the N-acetylmuramoyl-L-alanine amidase 3 family.

The protein localises to the secreted. Functionally, probably involved in cell-wall metabolism. The polypeptide is Probable cell wall amidase LytH (lytH) (Staphylococcus aureus (strain USA300)).